A 387-amino-acid polypeptide reads, in one-letter code: Patatin-01 (387 aa).

The N-terminal stretch at 1-23 (MATTKSFLILSVMILATTSSTFA) is a signal peptide. Residues 32–230 (LSIDGGGIKG…TVADPALLSV (199 aa)) form the PNPLA domain. The GXGXXG signature appears at 36–41 (GGGIKG). The GXSXG signature appears at 75–79 (GTSTG). Serine 77 functions as the Nucleophile in the catalytic mechanism. The N-linked (GlcNAc...) asparagine glycan is linked to asparagine 115. The active-site Proton acceptor is the aspartate 216. Positions 216–218 (DGA) match the DGA/G motif. A coiled-coil region spans residues 361–385 (ETYEEALKRFAKLLSDRKKLRANKA).

Belongs to the patatin family. As to expression, tuber.

It localises to the vacuole. Probable lipolytic acyl hydrolase (LAH), an activity which is thought to be involved in the response of tubers to pathogens. This is Patatin-01 from Solanum tuberosum (Potato).